The primary structure comprises 1205 residues: PAN2-PAN3 deadenylation complex catalytic subunit Pan2 (1205 aa).

WD repeat units follow at residues 153-193, 195-231, 244-280, and 328-367; these read DESE…QKYA, ETPG…VEHE, VHGN…AITP, and PVGP…SFNP. The segment at 368–484 is linker; the sequence is YSRETEFALP…PTGREEEPLH (117 aa). Residues 485 to 924 enclose the USP domain; that stretch reads TVSKKYRKVT…VPAILYYVKR (440 aa). Serine 784 carries the phosphoserine modification. In terms of domain architecture, Exonuclease spans 975–1147; sequence VGLDAEFVTL…EDARTALQLY (173 aa). Residues aspartate 978, glutamate 980, aspartate 1087, and aspartate 1139 each contribute to the a divalent metal cation site. The disordered stretch occupies residues 1179 to 1205; sequence WKVPEPESQSSPKSKAGLRPGALGWVG. Over residues 1184–1193 the composition is skewed to low complexity; the sequence is PESQSSPKSK. Serine 1189 carries the post-translational modification Phosphoserine.

It belongs to the peptidase C19 family. PAN2 subfamily. Forms a heterotrimer with an asymmetric homodimer of the regulatory subunit PAN3 to form the poly(A)-nuclease (PAN) deadenylation complex. Interacts with PAN3 isoform 1/Pan3L and isoform 3/Pan3S. Interacts with ZFP36. Requires a divalent metal cation as cofactor.

Its subcellular location is the cytoplasm. The protein resides in the P-body. The protein localises to the nucleus. The enzyme catalyses Exonucleolytic cleavage of poly(A) to 5'-AMP.. Its activity is regulated as follows. Positively regulated by the regulatory subunit PAN3. Its function is as follows. Catalytic subunit of the poly(A)-nuclease (PAN) deadenylation complex, one of two cytoplasmic mRNA deadenylases involved in general and miRNA-mediated mRNA turnover. PAN specifically shortens poly(A) tails of RNA and the activity is stimulated by poly(A)-binding protein (PABP). PAN deadenylation is followed by rapid degradation of the shortened mRNA tails by the CCR4-NOT complex. Deadenylated mRNAs are then degraded by two alternative mechanisms, namely exosome-mediated 3'-5' exonucleolytic degradation, or deadenylation-dependent mRNA decaping and subsequent 5'-3' exonucleolytic degradation by XRN1. Also acts as an important regulator of the HIF1A-mediated hypoxic response. Required for HIF1A mRNA stability independent of poly(A) tail length regulation. The polypeptide is PAN2-PAN3 deadenylation complex catalytic subunit Pan2 (Rattus norvegicus (Rat)).